Reading from the N-terminus, the 256-residue chain is Enolase-phosphatase E1 (256 aa).

Asp14 and Glu16 together coordinate Mg(2+). Substrate-binding positions include 142 to 143 (SS) and Lys176. Asp201 lines the Mg(2+) pocket.

It belongs to the HAD-like hydrolase superfamily. MasA/MtnC family. Monomer. Mg(2+) is required as a cofactor.

It localises to the cytoplasm. The protein resides in the nucleus. The enzyme catalyses 5-methylsulfanyl-2,3-dioxopentyl phosphate + H2O = 1,2-dihydroxy-5-(methylsulfanyl)pent-1-en-3-one + phosphate. It participates in amino-acid biosynthesis; L-methionine biosynthesis via salvage pathway; L-methionine from S-methyl-5-thio-alpha-D-ribose 1-phosphate: step 3/6. The protein operates within amino-acid biosynthesis; L-methionine biosynthesis via salvage pathway; L-methionine from S-methyl-5-thio-alpha-D-ribose 1-phosphate: step 4/6. Bifunctional enzyme that catalyzes the enolization of 2,3-diketo-5-methylthiopentyl-1-phosphate (DK-MTP-1-P) into the intermediate 2-hydroxy-3-keto-5-methylthiopentenyl-1-phosphate (HK-MTPenyl-1-P), which is then dephosphorylated to form the acireductone 1,2-dihydroxy-3-keto-5-methylthiopentene (DHK-MTPene). The protein is Enolase-phosphatase E1 of Drosophila sechellia (Fruit fly).